The primary structure comprises 739 residues: Endoglucanase F (739 aa).

Positions 1 to 27 (MKKILAFLLTVALVAVVAIPQAVVSFA) are cleaved as a signal peptide. The catalytic stretch occupies residues 28–470 (ADFNYGEALQ…AKMYEKYGGE (443 aa)). Asp-84 serves as the catalytic Nucleophile. Catalysis depends on residues His-400, Asp-438, and Glu-447. The 160-residue stretch at 480-639 (TPGEEFYVEA…NVRVWGKVPD (160 aa)) folds into the CBM3 domain. In terms of domain architecture, Dockerin spans 664 to 737 (PGIMLGDVNF…ILKLIEKFPA (74 aa)).

Belongs to the glycosyl hydrolase 9 (cellulase E) family. It depends on Ca(2+) as a cofactor.

The catalysed reaction is Endohydrolysis of (1-&gt;4)-beta-D-glucosidic linkages in cellulose, lichenin and cereal beta-D-glucans.. In terms of biological role, this enzyme catalyzes the endohydrolysis of 1,4-beta-glucosidic linkages in cellulose, lichenin and cereal beta-D-glucans. This is Endoglucanase F (celF) from Acetivibrio thermocellus (strain ATCC 27405 / DSM 1237 / JCM 9322 / NBRC 103400 / NCIMB 10682 / NRRL B-4536 / VPI 7372) (Clostridium thermocellum).